A 371-amino-acid polypeptide reads, in one-letter code: Ecto-ADP-ribosyltransferase 3 (371 aa).

The signal sequence occupies residues 1 to 26 (MKMGHFEMVTTLLAAAVLMDIFQVKA). A disulfide bridge links Cys-43 with Cys-255. Residues 64–250 (ALLRMVWDNA…LVLQSINSTC (187 aa)) form the TR mART core domain. Residues Tyr-101 and Asn-182 each coordinate NAD(+). The interval 306 to 346 (VLQTEENPLLPDEKPDRSRGKANNPTPGLVPGPKSHPSASS) is disordered. Ser-345 carries GPI-anchor amidated serine lipidation. Positions 346-371 (SGNTLLPSVMASTILLVASAVNFIEL) are cleaved as a propeptide — removed in mature form.

It belongs to the Arg-specific ADP-ribosyltransferase family.

Its subcellular location is the cell membrane. It carries out the reaction L-arginyl-[protein] + NAD(+) = N(omega)-(ADP-D-ribosyl)-L-arginyl-[protein] + nicotinamide + H(+). The sequence is that of Ecto-ADP-ribosyltransferase 3 (Art3) from Mus musculus (Mouse).